A 1563-amino-acid polypeptide reads, in one-letter code: DNA-directed RNA polymerase subunit beta' (1563 aa).

Zn(2+) is bound by residues cysteine 61, cysteine 63, cysteine 76, and cysteine 79. Residues aspartate 588, aspartate 590, and aspartate 592 each coordinate Mg(2+). Cysteine 925, cysteine 999, cysteine 1006, and cysteine 1009 together coordinate Zn(2+).

Belongs to the RNA polymerase beta' chain family. The RNAP catalytic core consists of 2 alpha, 1 beta, 1 beta' and 1 omega subunit. When a sigma factor is associated with the core the holoenzyme is formed, which can initiate transcription. Requires Mg(2+) as cofactor. Zn(2+) is required as a cofactor.

The enzyme catalyses RNA(n) + a ribonucleoside 5'-triphosphate = RNA(n+1) + diphosphate. DNA-dependent RNA polymerase catalyzes the transcription of DNA into RNA using the four ribonucleoside triphosphates as substrates. The polypeptide is DNA-directed RNA polymerase subunit beta' (Hydrogenobaculum sp. (strain Y04AAS1)).